The primary structure comprises 266 residues: Signal peptidase I (266 aa).

Topologically, residues 1-20 are cytoplasmic; the sequence is MQTDNTKSNTNKTAKQEWGS. A helical membrane pass occupies residues 21–41; sequence FAFVICIALLIRILIMEPFNV. The Extracellular portion of the chain corresponds to 42–266; that stretch reads PTGSMKATIL…IFRNLYNTDA (225 aa). Catalysis depends on residues serine 45 and lysine 108.

This sequence belongs to the peptidase S26 family.

It is found in the cell membrane. It catalyses the reaction Cleavage of hydrophobic, N-terminal signal or leader sequences from secreted and periplasmic proteins.. In Rickettsia conorii (strain ATCC VR-613 / Malish 7), this protein is Signal peptidase I (lepB).